A 603-amino-acid chain; its full sequence is UvrABC system protein C (603 aa).

Residues 15-92 form the GIY-YIG domain; it reads DQPGCYLMKD…IKKHDPRFNI (78 aa). Residues 197–232 enclose the UVR domain; it reads KTVKNDLMKKMQVAAENMEFEKAGEFRDQINAIETT.

It belongs to the UvrC family. In terms of assembly, interacts with UvrB in an incision complex.

It is found in the cytoplasm. Its function is as follows. The UvrABC repair system catalyzes the recognition and processing of DNA lesions. UvrC both incises the 5' and 3' sides of the lesion. The N-terminal half is responsible for the 3' incision and the C-terminal half is responsible for the 5' incision. The sequence is that of UvrABC system protein C from Listeria welshimeri serovar 6b (strain ATCC 35897 / DSM 20650 / CCUG 15529 / CIP 8149 / NCTC 11857 / SLCC 5334 / V8).